A 125-amino-acid polypeptide reads, in one-letter code: Holo-[acyl-carrier-protein] synthase (125 aa).

Residues Asp8 and Glu56 each contribute to the Mg(2+) site.

It belongs to the P-Pant transferase superfamily. AcpS family. The cofactor is Mg(2+).

Its subcellular location is the cytoplasm. The enzyme catalyses apo-[ACP] + CoA = holo-[ACP] + adenosine 3',5'-bisphosphate + H(+). Functionally, transfers the 4'-phosphopantetheine moiety from coenzyme A to a Ser of acyl-carrier-protein. In Borrelia hermsii (strain HS1 / DAH), this protein is Holo-[acyl-carrier-protein] synthase.